An 83-amino-acid chain; its full sequence is MAFGAGGGGGRRPFFRRRKTCPFSGPNAPKIDYKDVKLLSRYVSERGKIVPSRITAVSAKKQRELAQAIKRARFLGFLPYVIR.

The protein belongs to the bacterial ribosomal protein bS18 family. Part of the 30S ribosomal subunit. Forms a tight heterodimer with protein bS6.

Functionally, binds as a heterodimer with protein bS6 to the central domain of the 16S rRNA, where it helps stabilize the platform of the 30S subunit. This is Small ribosomal subunit protein bS18 from Methylobacterium sp. (strain 4-46).